We begin with the raw amino-acid sequence, 39 residues long: Photosystem II reaction center protein J (39 aa).

The chain crosses the membrane as a helical span at residues 7–27; that stretch reads IPLWIVATVAGTGALVVVGLF.

It belongs to the PsbJ family. As to quaternary structure, PSII is composed of 1 copy each of membrane proteins PsbA, PsbB, PsbC, PsbD, PsbE, PsbF, PsbH, PsbI, PsbJ, PsbK, PsbL, PsbM, PsbT, PsbX, PsbY, PsbZ, Psb30/Ycf12, peripheral proteins PsbO, CyanoQ (PsbQ), PsbU, PsbV and a large number of cofactors. It forms dimeric complexes.

Its subcellular location is the cellular thylakoid membrane. In terms of biological role, one of the components of the core complex of photosystem II (PSII). PSII is a light-driven water:plastoquinone oxidoreductase that uses light energy to abstract electrons from H(2)O, generating O(2) and a proton gradient subsequently used for ATP formation. It consists of a core antenna complex that captures photons, and an electron transfer chain that converts photonic excitation into a charge separation. The chain is Photosystem II reaction center protein J from Synechococcus sp. (strain ATCC 27144 / PCC 6301 / SAUG 1402/1) (Anacystis nidulans).